The chain runs to 506 residues: RNA-splicing ligase RtcB homolog (506 aa).

The Mn(2+) site is built by Asp-120, Cys-123, His-228, His-260, and His-354. GMP is bound at residue 227-231 (NHYAE). Residues 354–355 (HN), 403–406 (GGSM), Ser-410, 429–432 (HGAG), and Lys-505 contribute to the GMP site. Catalysis depends on His-429, which acts as the GMP-histidine intermediate.

The protein belongs to the RtcB family. As to quaternary structure, catalytic component of the tRNA-splicing ligase complex. Mn(2+) serves as cofactor.

The catalysed reaction is a 3'-end 3'-phospho-ribonucleotide-RNA + a 5'-end dephospho-ribonucleoside-RNA + GTP = a ribonucleotidyl-ribonucleotide-RNA + GMP + diphosphate. The enzyme catalyses a 3'-end 2',3'-cyclophospho-ribonucleotide-RNA + a 5'-end dephospho-ribonucleoside-RNA + GTP + H2O = a ribonucleotidyl-ribonucleotide-RNA + GMP + diphosphate + H(+). In terms of biological role, catalytic subunit of the tRNA-splicing ligase complex that acts by directly joining spliced tRNA halves to mature-sized tRNAs by incorporating the precursor-derived splice junction phosphate into the mature tRNA as a canonical 3',5'-phosphodiester. May act as an RNA ligase with broad substrate specificity, and may function toward other RNAs. This is RNA-splicing ligase RtcB homolog from Anopheles gambiae (African malaria mosquito).